The sequence spans 660 residues: U-box domain-containing protein 13 (660 aa).

A disordered region spans residues D227–K252. Positions G236–S250 are enriched in polar residues. The U-box domain occupies V255–E329. ARM repeat units lie at residues A384 to I423, E425 to V464, D466 to I505, Q507 to S546, and P548 to S587. The segment at A631–T660 is disordered. Residues P651–T660 show a composition bias toward polar residues.

Binds to SD11, SD16, SD17, SD18, SD113, SD129 and SD25. In terms of processing, phosphorylated by SD1-6 and SD1-7.

The protein localises to the nucleus. Its subcellular location is the cytoplasm. It carries out the reaction S-ubiquitinyl-[E2 ubiquitin-conjugating enzyme]-L-cysteine + [acceptor protein]-L-lysine = [E2 ubiquitin-conjugating enzyme]-L-cysteine + N(6)-ubiquitinyl-[acceptor protein]-L-lysine.. Its pathway is protein modification; protein ubiquitination. Its function is as follows. Functions as an E3 ubiquitin ligase. The sequence is that of U-box domain-containing protein 13 (PUB13) from Arabidopsis thaliana (Mouse-ear cress).